We begin with the raw amino-acid sequence, 242 residues long: Biosynthetic peptidoglycan transglycosylase (242 aa).

The chain crosses the membrane as a helical span at residues 15–35 (FLLLLMVVLAVFWGGGIALFS).

This sequence belongs to the glycosyltransferase 51 family.

It localises to the cell inner membrane. The enzyme catalyses [GlcNAc-(1-&gt;4)-Mur2Ac(oyl-L-Ala-gamma-D-Glu-L-Lys-D-Ala-D-Ala)](n)-di-trans,octa-cis-undecaprenyl diphosphate + beta-D-GlcNAc-(1-&gt;4)-Mur2Ac(oyl-L-Ala-gamma-D-Glu-L-Lys-D-Ala-D-Ala)-di-trans,octa-cis-undecaprenyl diphosphate = [GlcNAc-(1-&gt;4)-Mur2Ac(oyl-L-Ala-gamma-D-Glu-L-Lys-D-Ala-D-Ala)](n+1)-di-trans,octa-cis-undecaprenyl diphosphate + di-trans,octa-cis-undecaprenyl diphosphate + H(+). Its pathway is cell wall biogenesis; peptidoglycan biosynthesis. Its function is as follows. Peptidoglycan polymerase that catalyzes glycan chain elongation from lipid-linked precursors. The polypeptide is Biosynthetic peptidoglycan transglycosylase (Shigella sonnei (strain Ss046)).